We begin with the raw amino-acid sequence, 37 residues long: Serrulin (37 aa).

A disordered region spans residues phenylalanine 16–glycine 37. Lysine 36 carries the post-translational modification Lysine amide.

Expressed in hemocytes (at protein level).

The protein resides in the secreted. In terms of biological role, antimicrobial protein with activity against Gram-positive and Gram-negative bacteria, filamentous fungus, and yeast. Was tested against Micrococcus luteus A270 (MIC=0.5-1 uM), Echerichia coli SBS 363 (MIC=9-16 uM), Pseudomonas aeruginosa (MIC=0.01-0.3 uM), Aspergillus niger (MIC=3-6 uM), and Candida albicans MDM8 (MIC=1.5-3 uM). Has no hemolytic activity against human erythrocytes. In Tityus serrulatus (Brazilian scorpion), this protein is Serrulin.